Reading from the N-terminus, the 283-residue chain is MLIIETLPLLRQQIRRLRMEGKRVALVPTMGNLHDGHMKLVDEAKARADVVVVSIFVNPMQFDRPEDLARYPRTLQEDCEKLNKRKVDLVFAPSVKEIYPNGTETHTYVDVPGLSTMLEGASRPGHFRGVSTIVSKLFNLVQPDIACFGEKDFQQLALIRKMVADMGFDIEIVGVPIMRAKDGLALSSRNGYLTAEQRKIAPGLYKVLSSIADKLQAGERDLDEIIAIAGQELNEKGFRADDIQIRDADTLLEVSETSKRAVILVAAWLGDARLIDNKMVELA.

30-37 (MGNLHDGH) is an ATP binding site. Residue His-37 is the Proton donor of the active site. Gln-61 serves as a coordination point for (R)-pantoate. Beta-alanine is bound at residue Gln-61. 149 to 152 (GEKD) is a binding site for ATP. Gln-155 lines the (R)-pantoate pocket. 186 to 189 (LSSR) contributes to the ATP binding site.

This sequence belongs to the pantothenate synthetase family. As to quaternary structure, homodimer.

It localises to the cytoplasm. The enzyme catalyses (R)-pantoate + beta-alanine + ATP = (R)-pantothenate + AMP + diphosphate + H(+). The protein operates within cofactor biosynthesis; (R)-pantothenate biosynthesis; (R)-pantothenate from (R)-pantoate and beta-alanine: step 1/1. In terms of biological role, catalyzes the condensation of pantoate with beta-alanine in an ATP-dependent reaction via a pantoyl-adenylate intermediate. This is Pantothenate synthetase from Escherichia coli O157:H7.